The following is a 497-amino-acid chain: Early growth response protein 1-A (497 aa).

A compositionally biased stretch (low complexity) spans 139–165; it reads SPSSAPSSSPSSSSSSSSSQSPPLSCS. 3 disordered regions span residues 139-169, 175-194, and 286-309; these read SPSSAPSSSPSSSSSSSSSQSPPLSCSVQSN, YSAAPTFPNSSSEIFPDHSP, and PSRMRKYPNRPSKTPPHERPYGCP. 3 C2H2-type zinc fingers span residues 306–330, 336–358, and 364–386; these read YGCPVESCDRRFSRSDELTRHIRIH, FQCRICMRNFSRSDHLTTHIRTH, and FACDICGRKFARSDERKRHTKIH. Residues 377–441 form a disordered region; the sequence is DERKRHTKIH…SYPSPVHSSF (65 aa). Basic residues predominate over residues 381-391; it reads RHTKIHLRQKD. A compositionally biased stretch (low complexity) spans 397 to 441; that stretch reads ATPVSVASPVSSYSPSASTSYPSPVPTSYSSPVSSSYPSPVHSSF.

It belongs to the EGR C2H2-type zinc-finger protein family. Expressed in the presumptive mesoderm. In blastula embryos, expressed in the dorsal marginal zone, and at the onset of gastrulation expression is specific to the Spemann organizer. As gastrulation proceeds, expressed in a ring around the yolk plug. This expression is maintained in advanced gastrulae, with weak expression also extending into the dorsal midline. By the neurula stage, expression is excluded from the notochord. In late tailbud stages, expressed in two spots in the anterior forebrain, which are connected via a bridge of cells that also show expression.

It is found in the nucleus. The protein resides in the cytoplasm. Functionally, transcriptional regulator. Recognizes and binds to the DNA sequence 5'-GCG(T/G)GGGCG-3'(EGR-site) in the promoter region of target genes. Binds double-stranded target DNA, irrespective of the cytosine methylation status. Regulates the transcription of numerous target genes, and thereby plays an important role in regulating the response to growth factors, DNA damage, and ischemia. Plays a role in the regulation of cell survival, proliferation and cell death. Mediates responses to ischemia and hypoxia; regulates the expression of proteins that are involved in inflammatory processes. Plays a role in regulating the expression of circadian clock genes. This is Early growth response protein 1-A (egr1-a) from Xenopus laevis (African clawed frog).